The chain runs to 479 residues: Anaerobic nitric oxide reductase flavorubredoxin (479 aa).

Residues Leu-30–Ile-210 are zinc metallo-hydrolase. Positions 79, 81, 83, 147, 166, and 227 each coordinate Fe cation. Residues Ile-254–Ala-393 form the Flavodoxin-like domain. FMN contacts are provided by residues Thr-260–Asn-264 and Ala-342–Leu-369. One can recognise a Rubredoxin-like domain in the interval Gly-423–Leu-474. The Fe cation site is built by Cys-428, Cys-431, Cys-461, and Cys-464.

The protein in the N-terminal section; belongs to the zinc metallo-hydrolase group 3 family. In terms of assembly, homotetramer. Fe cation serves as cofactor. Requires FMN as cofactor.

It localises to the cytoplasm. It participates in nitrogen metabolism; nitric oxide reduction. Anaerobic nitric oxide reductase; uses NADH to detoxify nitric oxide (NO), protecting several 4Fe-4S NO-sensitive enzymes. Has at least 2 reductase partners, only one of which (NorW, flavorubredoxin reductase) has been identified. NO probably binds to the di-iron center; electrons enter from the NorW at rubredoxin and are transferred sequentially to the FMN center and the di-iron center. Also able to function as an aerobic oxygen reductase. This is Anaerobic nitric oxide reductase flavorubredoxin from Escherichia coli (strain SMS-3-5 / SECEC).